The sequence spans 319 residues: Probable enoyl-CoA hydratase alpha subunit (319 aa).

The segment at 199-298 is DUF35; the sequence is FEAAKQRRLV…EIGMPVVLDW (100 aa).

This sequence belongs to the thioester dehydratase family. Heterodimer composed of ChsH1 and ChsH2. Two heterodimers combine to form a heterotetramer. The complex interacts with Ltp2 via the DUF35 C-terminal region of ChsH2.

Functionally, probably involved in bile acid degradation. The chain is Probable enoyl-CoA hydratase alpha subunit from Thermomonospora curvata (strain ATCC 19995 / DSM 43183 / JCM 3096 / KCTC 9072 / NBRC 15933 / NCIMB 10081 / Henssen B9).